We begin with the raw amino-acid sequence, 96 residues long: uncharacterized protein (96 aa).

The tract at residues 35 to 96 (SPSGEKRSTK…KKFSSPPHPK (62 aa)) is disordered. Basic and acidic residues predominate over residues 38-52 (GEKRSTKNQTKENTK). Residues 69-80 (ANQQTNENSKPL) show a composition bias toward polar residues.

This is an uncharacterized protein from Dictyostelium discoideum (Social amoeba).